Consider the following 326-residue polypeptide: Homeobox protein Hox-A1 (326 aa).

The Antp-type hexapeptide signature appears at 196–201 (TFDWMK). The segment at residues 221-280 (PNTVRTNFTTKQLTELEKEFHFNKYLTRARRVEIAAALQLNETQVKIWFQNRRMKQKKRE) is a DNA-binding region (homeobox). The interval 273–326 (RMKQKKREKEGLTSASPATPGSEANTEDTSDKCNSTSSTPSPSSSTSETINTSG) is disordered. Over residues 285–296 (TSASPATPGSEA) the composition is skewed to polar residues. Positions 306-326 (NSTSSTPSPSSSTSETINTSG) are enriched in low complexity.

The protein belongs to the Antp homeobox family. Labial subfamily.

The protein localises to the nucleus. Sequence-specific transcription factor. Part of a developmental regulatory system that provides cells with specific positional identities on the anterior-posterior axis. Acts on the anterior body structures. Seems to act in the maintenance and/or generation of hindbrain segments. The protein is Homeobox protein Hox-A1 (HOXA1) of Heterodontus francisci (Horn shark).